A 480-amino-acid polypeptide reads, in one-letter code: Protein nucleotidyltransferase YdiU (480 aa).

ATP contacts are provided by glycine 86, glycine 88, arginine 89, lysine 109, aspartate 121, glycine 122, arginine 172, and arginine 179. Aspartate 248 serves as the catalytic Proton acceptor. 2 residues coordinate Mg(2+): asparagine 249 and aspartate 258. Aspartate 258 provides a ligand contact to ATP.

The protein belongs to the SELO family. Mg(2+) serves as cofactor. Mn(2+) is required as a cofactor.

The catalysed reaction is L-seryl-[protein] + ATP = 3-O-(5'-adenylyl)-L-seryl-[protein] + diphosphate. The enzyme catalyses L-threonyl-[protein] + ATP = 3-O-(5'-adenylyl)-L-threonyl-[protein] + diphosphate. It catalyses the reaction L-tyrosyl-[protein] + ATP = O-(5'-adenylyl)-L-tyrosyl-[protein] + diphosphate. It carries out the reaction L-histidyl-[protein] + UTP = N(tele)-(5'-uridylyl)-L-histidyl-[protein] + diphosphate. The catalysed reaction is L-seryl-[protein] + UTP = O-(5'-uridylyl)-L-seryl-[protein] + diphosphate. The enzyme catalyses L-tyrosyl-[protein] + UTP = O-(5'-uridylyl)-L-tyrosyl-[protein] + diphosphate. Nucleotidyltransferase involved in the post-translational modification of proteins. It can catalyze the addition of adenosine monophosphate (AMP) or uridine monophosphate (UMP) to a protein, resulting in modifications known as AMPylation and UMPylation. This chain is Protein nucleotidyltransferase YdiU, found in Klebsiella pneumoniae subsp. pneumoniae (strain ATCC 700721 / MGH 78578).